Consider the following 876-residue polypeptide: Valine--tRNA ligase (876 aa).

Positions 44–54 (PNVTGKLHLGH) match the 'HIGH' region motif. The 'KMSKS' region motif lies at 520 to 524 (KMSKS). An ATP-binding site is contributed by Lys523. A coiled-coil region spans residues 805–876 (LEGLIDMDKE…VKNRIEQLKA (72 aa)).

It belongs to the class-I aminoacyl-tRNA synthetase family. ValS type 1 subfamily. In terms of assembly, monomer.

Its subcellular location is the cytoplasm. It catalyses the reaction tRNA(Val) + L-valine + ATP = L-valyl-tRNA(Val) + AMP + diphosphate. Functionally, catalyzes the attachment of valine to tRNA(Val). As ValRS can inadvertently accommodate and process structurally similar amino acids such as threonine, to avoid such errors, it has a 'posttransfer' editing activity that hydrolyzes mischarged Thr-tRNA(Val) in a tRNA-dependent manner. In Staphylococcus haemolyticus (strain JCSC1435), this protein is Valine--tRNA ligase.